Reading from the N-terminus, the 206-residue chain is Flavin prenyltransferase UbiX (206 aa).

Residues 14 to 16 (GAS), Thr-40, 101 to 104 (SMGT), and Arg-136 contribute to the FMN site. Dimethylallyl phosphate-binding residues include Tyr-166 and Lys-182.

The protein belongs to the UbiX/PAD1 family.

The enzyme catalyses dimethylallyl phosphate + FMNH2 = prenylated FMNH2 + phosphate. In terms of biological role, flavin prenyltransferase that catalyzes the synthesis of the prenylated FMN cofactor (prenyl-FMN) for 4-hydroxy-3-polyprenylbenzoic acid decarboxylase UbiD. The prenyltransferase is metal-independent and links a dimethylallyl moiety from dimethylallyl monophosphate (DMAP) to the flavin N5 and C6 atoms of FMN. This Halalkalibacterium halodurans (strain ATCC BAA-125 / DSM 18197 / FERM 7344 / JCM 9153 / C-125) (Bacillus halodurans) protein is Flavin prenyltransferase UbiX.